Reading from the N-terminus, the 379-residue chain is Type II methyltransferase M.CvrRI (379 aa).

The protein belongs to the N(4)/N(6)-methyltransferase family.

The catalysed reaction is a 2'-deoxyadenosine in DNA + S-adenosyl-L-methionine = an N(6)-methyl-2'-deoxyadenosine in DNA + S-adenosyl-L-homocysteine + H(+). A gamma subtype methylase, recognizes the double-stranded sequence 5'-TGCA-3', methylates A-4 on both strands, and protects the DNA from cleavage by the CviRI endonuclease. The polypeptide is Type II methyltransferase M.CvrRI (CVIRIM) (Chlorella (PBCV-XZ-6E)).